The primary structure comprises 57 residues: MKFEVRGAFKTLEGWQKFTKVVEANNERYALEKVYSLIGSNHKVKRNLIKIEEVKQA.

The protein belongs to the eukaryotic ribosomal protein eL20 family. As to quaternary structure, part of the 50S ribosomal subunit. Binds 23S rRNA.

The sequence is that of Large ribosomal subunit protein eL20 from Archaeoglobus fulgidus (strain ATCC 49558 / DSM 4304 / JCM 9628 / NBRC 100126 / VC-16).